Reading from the N-terminus, the 84-residue chain is UPF0410 protein YmgE (84 aa).

Transmembrane regions (helical) follow at residues 1 to 21, 27 to 47, and 58 to 78; these read MGIIAWIIFDLIAGIIAKLIM, GGFFLTCILGIVGAVVGGWLA, and GFNLHSFLVAVVGAILVLGIF.

The protein belongs to the UPF0410 family.

Its subcellular location is the cell inner membrane. The sequence is that of UPF0410 protein YmgE (ymgE) from Escherichia coli (strain K12).